Reading from the N-terminus, the 222-residue chain is MLPAQEAAKLYHTNYVRNSRAIGVLWAIFTICFAIINVVCFIQPYWIGDGVDTPQAGYFGLFHYCIGNGFSRELTCRGSFTDFSTLPSGAFKAASFFIGLSMMLIIACIVCFTLFFFCNTATVYKICAWMQLTFAACLVLGCMIFPDGWDSDEAKRMCGEKTDKYTLGACSVRWAYILAIIGILDALILSFLAVVLGNRQDSLMAEELKAENKVLLSQYSLE.

A run of 4 helical transmembrane segments spans residues 22–42 (IGVL…VCFI), 96–116 (FFIG…TLFF), 126–146 (ICAW…MIFP), and 177–197 (ILAI…VVLG).

This sequence belongs to the LHFP family. In terms of tissue distribution, brain-specific.

It is found in the membrane. This chain is LHFPL tetraspan subfamily member 3 protein, found in Mus musculus (Mouse).